We begin with the raw amino-acid sequence, 155 residues long: Protein-export protein SecB (155 aa).

This sequence belongs to the SecB family. Homotetramer, a dimer of dimers. One homotetramer interacts with 1 SecA dimer.

It is found in the cytoplasm. One of the proteins required for the normal export of preproteins out of the cell cytoplasm. It is a molecular chaperone that binds to a subset of precursor proteins, maintaining them in a translocation-competent state. It also specifically binds to its receptor SecA. The chain is Protein-export protein SecB from Cronobacter sakazakii (strain ATCC BAA-894) (Enterobacter sakazakii).